The primary structure comprises 228 residues: Core-capsid bridging protein (228 aa).

The disordered stretch occupies residues 146–177 (ARPPAARISPPRRRRRRRRSPRPRATAAYRSS). The segment covering 155–167 (PPRRRRRRRRSPR) has biased composition (basic residues). A compositionally biased stretch (low complexity) spans 168-177 (PRATAAYRSS).

It belongs to the adenoviridae core-capsid bridging protein family. Monomer. Homodimer. Exists in equilibrium between monomers and dimers in solution. Interacts with the histone-like nucleoprotein; this interactions bridge the virus core to the capsid. Interacts with core protein X; this interactions bridge the virus core to the capsid. Interacts with the endosome lysis protein VI; this interactions bridge the virus core to the capsid. Interacts with the peripentonal hexons. Interacts with host NPM1; this interaction might play a role in virus assembly.

It is found in the virion. It localises to the host nucleus. The protein localises to the host nucleolus. Associates loosely with the viral DNA to form an outer shell around the nucleoprotein-DNA complex and links it with the capsid by binding the endosome lysis protein. Dissociates from the viral genome during entry. Might be involved in nuclear capsid assembly of the viral particles through its association with NPM1/nucleophosmin. The sequence is that of Core-capsid bridging protein from Murine adenovirus A serotype 1 (MAdV-1).